Here is a 60-residue protein sequence, read N- to C-terminus: Potassium channel toxin alpha-KTx 12.7 (60 aa).

The first 22 residues, 1–22, serve as a signal peptide directing secretion; that stretch reads MSNMPVLIITLLLFSMYISTAA. Cystine bridges form between C30–C51, C36–C56, and C40–C58.

This sequence belongs to the short scorpion toxin superfamily. Potassium channel inhibitor family. Alpha-KTx 12 subfamily. In terms of tissue distribution, expressed by the venom gland.

The protein localises to the secreted. Its function is as follows. Inhibits voltage-gated potassium channels. The chain is Potassium channel toxin alpha-KTx 12.7 from Lychas mucronatus (Chinese swimming scorpion).